Consider the following 428-residue polypeptide: uncharacterized protein (428 aa).

This is an uncharacterized protein from Treponema pallidum (strain Nichols).